A 242-amino-acid polypeptide reads, in one-letter code: Phosphoribosylaminoimidazole-succinocarboxamide synthase (242 aa).

The protein belongs to the SAICAR synthetase family.

The catalysed reaction is 5-amino-1-(5-phospho-D-ribosyl)imidazole-4-carboxylate + L-aspartate + ATP = (2S)-2-[5-amino-1-(5-phospho-beta-D-ribosyl)imidazole-4-carboxamido]succinate + ADP + phosphate + 2 H(+). It functions in the pathway purine metabolism; IMP biosynthesis via de novo pathway; 5-amino-1-(5-phospho-D-ribosyl)imidazole-4-carboxamide from 5-amino-1-(5-phospho-D-ribosyl)imidazole-4-carboxylate: step 1/2. The protein is Phosphoribosylaminoimidazole-succinocarboxamide synthase of Pediococcus pentosaceus (strain ATCC 25745 / CCUG 21536 / LMG 10740 / 183-1w).